A 354-amino-acid chain; its full sequence is DNA integrity scanning protein DisA (354 aa).

Positions 6-144 (EKELKSILKL…GHIKYVLRDS (139 aa)) constitute a DAC domain. Residues glycine 73, leucine 91, and 104–108 (TRHRT) each bind ATP.

The protein belongs to the DisA family. Homooctamer. The cofactor is Mg(2+).

The enzyme catalyses 2 ATP = 3',3'-c-di-AMP + 2 diphosphate. Participates in a DNA-damage check-point that is active prior to asymmetric division when DNA is damaged. DisA forms globular foci that rapidly scan along the chromosomes during sporulation, searching for lesions. When a lesion is present, DisA pauses at the lesion site. This triggers a cellular response that culminates in a temporary block in sporulation initiation. Functionally, also has diadenylate cyclase activity, catalyzing the condensation of 2 ATP molecules into cyclic di-AMP (c-di-AMP). c-di-AMP acts as a signaling molecule that couples DNA integrity with progression of sporulation. The rise in c-di-AMP level generated by DisA while scanning the chromosome, operates as a positive signal that advances sporulation; upon encountering a lesion, the DisA focus arrests at the damaged site and halts c-di-AMP synthesis. This chain is DNA integrity scanning protein DisA, found in Clostridium kluyveri (strain ATCC 8527 / DSM 555 / NBRC 12016 / NCIMB 10680 / K1).